We begin with the raw amino-acid sequence, 348 residues long: Nuclear receptor subfamily 1 group I member 3 (348 aa).

The segment at residues 8–83 (PRSCMVCGDR…AGMKKEMILS (76 aa)) is a DNA-binding region (nuclear receptor). Residues 11 to 31 (CMVCGDRATGYHFHALTCEGC) form an NR C4-type zinc finger. Thr38 is modified (phosphothreonine; by PKC). The NR C4-type zinc-finger motif lies at 47–71 (CPFAGSCKVNKAQRRHCPACRLQKC). Residues 109-348 (GQQELVQTLL…MMPLLQEICS (240 aa)) enclose the NR LBD domain.

This sequence belongs to the nuclear hormone receptor family. NR1 subfamily. As to quaternary structure, heterodimer of NR1I3 and RXR. Interacts with PSMC4. Interacts with ECT2. Directly interacts with DNAJC7; this complex may also include HSP90. Interacts with CRY1. Interacts with CRY2 in a ligand-dependent manner. In terms of processing, phosphorylated at Thr-38 by PKC, dephosphorylation of Thr-38 is required for nuclear translocation and activation.

The protein resides in the nucleus. Its subcellular location is the cytoplasm. It localises to the cytoskeleton. Functionally, binds and transactivates the retinoic acid response elements that control expression of the retinoic acid receptor beta 2 and alcohol dehydrogenase 3 genes. Transactivates both the phenobarbital responsive element module of the human CYP2B6 gene and the CYP3A4 xenobiotic response element. This is Nuclear receptor subfamily 1 group I member 3 (NR1I3) from Pusa sibirica (Baikal seal).